We begin with the raw amino-acid sequence, 465 residues long: Chromosomal replication initiator protein DnaA (465 aa).

A domain I, interacts with DnaA modulators region spans residues 1–85 (MSGFWESCLQ…IALVIGSGKA (85 aa)). Positions 85 to 129 (ATAARIQATTTDSGQNAPANPATTSEKRTAASEKARGKGSNYEKS) are domain II. Residues 93-108 (TTTDSGQNAPANPATT) show a composition bias toward polar residues. The tract at residues 93 to 125 (TTTDSGQNAPANPATTSEKRTAASEKARGKGSN) is disordered. The span at 109-125 (SEKRTAASEKARGKGSN) shows a compositional bias: basic and acidic residues. The domain III, AAA+ region stretch occupies residues 130–346 (RLFPSFTFDN…GALKKVLAYS (217 aa)). The ATP site is built by glycine 174, glycine 176, lysine 177, and threonine 178. Positions 347 to 465 (SFHGRVIALD…LHVLLQVLKG (119 aa)) are domain IV, binds dsDNA.

It belongs to the DnaA family. In terms of assembly, oligomerizes as a right-handed, spiral filament on DNA at oriC.

The protein localises to the cytoplasm. Its function is as follows. Plays an essential role in the initiation and regulation of chromosomal replication. ATP-DnaA binds to the origin of replication (oriC) to initiate formation of the DNA replication initiation complex once per cell cycle. Binds the DnaA box (a 9 base pair repeat at the origin) and separates the double-stranded (ds)DNA. Forms a right-handed helical filament on oriC DNA; dsDNA binds to the exterior of the filament while single-stranded (ss)DNA is stabiized in the filament's interior. The ATP-DnaA-oriC complex binds and stabilizes one strand of the AT-rich DNA unwinding element (DUE), permitting loading of DNA polymerase. After initiation quickly degrades to an ADP-DnaA complex that is not apt for DNA replication. Binds acidic phospholipids. The chain is Chromosomal replication initiator protein DnaA from Dechloromonas aromatica (strain RCB).